Here is a 193-residue protein sequence, read N- to C-terminus: CASP-like protein 2U1 (193 aa).

Residues 1–18 (MAMALALGGGQDAERKVK) are Cytoplasmic-facing. The chain crosses the membrane as a helical span at residues 19–39 (VAEVALRALLCGLGALAAALV). The Extracellular segment spans residues 40 to 61 (ATDTQTRTFFSLQKKASYTDMK). A helical transmembrane segment spans residues 62–82 (AMVFLVDAAAVAAGYSLLQLA). The Cytoplasmic segment spans residues 83–113 (ARCCGGGAMSSGRGDGGGRGRALSWCVFSCD). A helical membrane pass occupies residues 114–134 (QALAYVLLAAVAAALQASVVA). Over 135–156 (KRGQPELQWMGICALYGAFCRQ) the chain is Extracellular. The helical transmembrane segment at 157–177 (AGAGLATAVVAGLAAVLLAFL) threads the bilayer. Residues 178–193 (SAFNLFRLYGSGGTKS) are Cytoplasmic-facing.

It belongs to the Casparian strip membrane proteins (CASP) family. In terms of assembly, homodimer and heterodimers.

Its subcellular location is the cell membrane. In Sorghum bicolor (Sorghum), this protein is CASP-like protein 2U1.